We begin with the raw amino-acid sequence, 68 residues long: MPHFLDWFVPVYLVISVLILVGFGACIYYFEPGLQEAHKWRMQRPLVDRDLRKTLMVRDNLAFGGPEV.

The chain crosses the membrane as a helical span at residues 7–27 (WFVPVYLVISVLILVGFGACI).

In terms of tissue distribution, highly expressed in brain.

The protein resides in the nucleus. The protein localises to the cytoplasm. It localises to the membrane. Functionally, plays a role in the regulation of neuron maturation. In Homo sapiens (Human), this protein is Small integral membrane protein 45.